The following is a 117-amino-acid chain: uncharacterized protein (117 aa).

The tract at residues 16-56 (FSQSSDGRSNGGGSSSGDSVSTTSDGLLTTGTSPNTSSTSL) is disordered. The span at 31 to 56 (SGDSVSTTSDGLLTTGTSPNTSSTSL) shows a compositional bias: low complexity.

This is an uncharacterized protein from Saccharomyces cerevisiae (strain ATCC 204508 / S288c) (Baker's yeast).